The chain runs to 197 residues: MTTLYLASGSPRRQELLTQLGFSFEQVVPGIEEQRRAQESAQQYVVRLAREKAQAGVALVPRDLPVLGADTIVVLNGEVLEKPRDAAHAAEMLRLLSGNTHQVMTAVALADSQQTLDCLVVTEVTFRTLSAQDITGYVASGEPLDKAGAYGIQGRGGCFVRKINGSYHAVVGLPLVETYELLSHFNALRDKRDKHDG.

Residue aspartate 70 is the Proton acceptor of the active site.

This sequence belongs to the Maf family. YhdE subfamily. A divalent metal cation serves as cofactor.

The protein localises to the cytoplasm. It catalyses the reaction dTTP + H2O = dTMP + diphosphate + H(+). It carries out the reaction UTP + H2O = UMP + diphosphate + H(+). Nucleoside triphosphate pyrophosphatase that hydrolyzes dTTP and UTP. May have a dual role in cell division arrest and in preventing the incorporation of modified nucleotides into cellular nucleic acids. This is dTTP/UTP pyrophosphatase (yceF2) from Salmonella choleraesuis (strain SC-B67).